We begin with the raw amino-acid sequence, 381 residues long: Homoserine O-succinyltransferase (381 aa).

Residues 45–360 (NAVLVCHALN…PHGHDAFLLD (316 aa)) enclose the AB hydrolase-1 domain. Ser-151 (nucleophile) is an active-site residue. Arg-221 serves as a coordination point for substrate. Active-site residues include Asp-321 and His-354. Asp-355 serves as a coordination point for substrate.

This sequence belongs to the AB hydrolase superfamily. MetX family. In terms of assembly, homodimer.

It localises to the cytoplasm. It carries out the reaction L-homoserine + succinyl-CoA = O-succinyl-L-homoserine + CoA. The protein operates within amino-acid biosynthesis; L-methionine biosynthesis via de novo pathway; O-succinyl-L-homoserine from L-homoserine: step 1/1. In terms of biological role, transfers a succinyl group from succinyl-CoA to L-homoserine, forming succinyl-L-homoserine. The chain is Homoserine O-succinyltransferase from Burkholderia pseudomallei (strain 1710b).